The following is a 502-amino-acid chain: Probable cytosol aminopeptidase (502 aa).

Residues lysine 267 and aspartate 272 each coordinate Mn(2+). The active site involves lysine 279. The Mn(2+) site is built by aspartate 290, aspartate 349, and glutamate 351. The active site involves arginine 353.

Belongs to the peptidase M17 family. The cofactor is Mn(2+).

Its subcellular location is the cytoplasm. The catalysed reaction is Release of an N-terminal amino acid, Xaa-|-Yaa-, in which Xaa is preferably Leu, but may be other amino acids including Pro although not Arg or Lys, and Yaa may be Pro. Amino acid amides and methyl esters are also readily hydrolyzed, but rates on arylamides are exceedingly low.. It carries out the reaction Release of an N-terminal amino acid, preferentially leucine, but not glutamic or aspartic acids.. Presumably involved in the processing and regular turnover of intracellular proteins. Catalyzes the removal of unsubstituted N-terminal amino acids from various peptides. In Aeromonas hydrophila subsp. hydrophila (strain ATCC 7966 / DSM 30187 / BCRC 13018 / CCUG 14551 / JCM 1027 / KCTC 2358 / NCIMB 9240 / NCTC 8049), this protein is Probable cytosol aminopeptidase.